The following is a 411-amino-acid chain: LIM domain-binding protein 1 (411 aa).

Serine 2 carries the N-acetylserine modification. The residue at position 61 (threonine 61) is a Phosphothreonine. Phosphoserine occurs at positions 265 and 302. Disordered regions lie at residues 283-330 (APPA…TFAL) and 367-411 (DAAN…QASQ). Over residues 302–318 (SGGSTMSSGGGNTNNSN) the composition is skewed to low complexity. In terms of domain architecture, LIM interaction domain (LID) spans 336 to 375 (DVMVVGEPTLMGGEFGDEDERLITRLENTQFDAANGIDDE).

This sequence belongs to the LDB family. In terms of assembly, interacts with ESR1. Forms homodimers and heterodimers. Interacts with and activates LHX1/LIM1. Interacts with the LIM domains of ISL1 and LMO2. Can assemble in a complex with LMO2 and TAL1/SCL but does not interact with TAL1/SCL directly. Strongly interacts with the LIM2 domain of LMX1A and more weakly with the LIM1 domain. Homodimerization is not required for, and does not effect, LMX1A-binding. Component of a nuclear TAL-1 complex composed at least of CBFA2T3, LDB1, TAL1 and TCF3. Interacts with LHX6 and LHX9. At neuronal promoters, forms a complex with LHX3 involved in the specification of interneurons, in motor neurons, it is displaced by ISL1 to form a ternary complex in which ISL1 contacts both LHX3 and LDB1. Interacts with SLK; leading to negatively regulate SLK kinase activity. Interacts with YWHAZ. Interacts with PRDM1/BLIMP1. Interacts with LMO4. Interacts with RLIM/RNF12; the interaction inhibits the ubiquitination of LMO proteins. Ubiquitinated by RLIM/RNF12, leading to its degradation by the proteasome. In terms of tissue distribution, expressed in a wide range of adult tissues including brain, heart, skeletal muscle, colon, thymus, spleen, kidney, liver, small intestine, lung and peripheral blood leukocytes.

It is found in the nucleus. Binds to the LIM domain of a wide variety of LIM domain-containing transcription factors. May regulate the transcriptional activity of LIM-containing proteins by determining specific partner interactions. Plays a role in the development of interneurons and motor neurons in cooperation with LHX3 and ISL1. Acts synergistically with LHX1/LIM1 in axis formation and activation of gene expression. Acts with LMO2 in the regulation of red blood cell development, maintaining erythroid precursors in an immature state. In Homo sapiens (Human), this protein is LIM domain-binding protein 1 (LDB1).